Consider the following 299-residue polypeptide: Transcription factor MYB17 (299 aa).

HTH myb-type domains follow at residues 9–61 and 62–116; these read KIGL…TNYL and RPDI…KKRL. 2 DNA-binding regions (H-T-H motif) span residues 37–61 and 89–112; these read WRTLPKLAGLLRCGKSCRLRWTNYL and WAAIAAQLPGRTDNEIKNLWNTHL.

Interacts with LFY. As to expression, expressed in the shoot apex, young flower buds, developing carpels and siliques. Expressed in floral meristem, initiating floral primordia and developing flowers.

It localises to the nucleus. Its function is as follows. Transcription factor that may play a role in flower development by repressing ANT. Regulates the transition of meristem identity from vegetative growth to flowering. Acts downstream of LFY and upstream of AP1. Directly activates AP1 to promote floral fate. Together with LFY and AP1 may constitute a regulatory network that contributes to an abrupt and robust meristem identity transition. This is Transcription factor MYB17 from Arabidopsis thaliana (Mouse-ear cress).